The following is a 310-amino-acid chain: HPr kinase/phosphorylase (310 aa).

Active-site residues include H138 and K159. Residue 153–160 coordinates ATP; that stretch reads GKSGVGKS. S160 provides a ligand contact to Mg(2+). The Proton acceptor; for phosphorylation activity. Proton donor; for dephosphorylation activity role is filled by D177. An important for the catalytic mechanism of both phosphorylation and dephosphorylation region spans residues 201-210; it reads LEIRGLGIIN. E202 serves as a coordination point for Mg(2+). The active site involves R243. An important for the catalytic mechanism of dephosphorylation region spans residues 264–269; that stretch reads PVRPGR.

It belongs to the HPrK/P family. In terms of assembly, homohexamer. Mg(2+) serves as cofactor.

The enzyme catalyses [HPr protein]-L-serine + ATP = [HPr protein]-O-phospho-L-serine + ADP + H(+). It catalyses the reaction [HPr protein]-O-phospho-L-serine + phosphate + H(+) = [HPr protein]-L-serine + diphosphate. Its function is as follows. Catalyzes the ATP- as well as the pyrophosphate-dependent phosphorylation of a specific serine residue in HPr, a phosphocarrier protein of the phosphoenolpyruvate-dependent sugar phosphotransferase system (PTS). HprK/P also catalyzes the pyrophosphate-producing, inorganic phosphate-dependent dephosphorylation (phosphorolysis) of seryl-phosphorylated HPr (P-Ser-HPr). The two antagonistic activities of HprK/P are regulated by several intracellular metabolites, which change their concentration in response to the absence or presence of rapidly metabolisable carbon sources (glucose, fructose, etc.) in the growth medium. Also phosphorylates/dephosphorylates the HPr-like catabolite repression protein crh on a specific serine residue. Therefore, by controlling the phosphorylation state of HPr and crh, HPrK/P is a sensor enzyme that plays a major role in the regulation of carbon metabolism and sugar transport: it mediates carbon catabolite repression (CCR), and regulates PTS-catalyzed carbohydrate uptake and inducer exclusion. This chain is HPr kinase/phosphorylase, found in Bacillus pumilus (strain SAFR-032).